We begin with the raw amino-acid sequence, 174 residues long: Crossover junction endodeoxyribonuclease RuvC (174 aa).

Residues D8, E69, and D141 contribute to the active site. 3 residues coordinate Mg(2+): D8, E69, and D141.

Belongs to the RuvC family. As to quaternary structure, homodimer which binds Holliday junction (HJ) DNA. The HJ becomes 2-fold symmetrical on binding to RuvC with unstacked arms; it has a different conformation from HJ DNA in complex with RuvA. In the full resolvosome a probable DNA-RuvA(4)-RuvB(12)-RuvC(2) complex forms which resolves the HJ. It depends on Mg(2+) as a cofactor.

It localises to the cytoplasm. The enzyme catalyses Endonucleolytic cleavage at a junction such as a reciprocal single-stranded crossover between two homologous DNA duplexes (Holliday junction).. Its function is as follows. The RuvA-RuvB-RuvC complex processes Holliday junction (HJ) DNA during genetic recombination and DNA repair. Endonuclease that resolves HJ intermediates. Cleaves cruciform DNA by making single-stranded nicks across the HJ at symmetrical positions within the homologous arms, yielding a 5'-phosphate and a 3'-hydroxyl group; requires a central core of homology in the junction. The consensus cleavage sequence is 5'-(A/T)TT(C/G)-3'. Cleavage occurs on the 3'-side of the TT dinucleotide at the point of strand exchange. HJ branch migration catalyzed by RuvA-RuvB allows RuvC to scan DNA until it finds its consensus sequence, where it cleaves and resolves the cruciform DNA. The protein is Crossover junction endodeoxyribonuclease RuvC of Xanthomonas campestris pv. campestris (strain 8004).